A 563-amino-acid chain; its full sequence is Calmodulin-binding protein 60 G (563 aa).

The calmodulin-binding stretch occupies residues 1-76; it reads MKIRNSPSFH…SSCVSMERSR (76 aa). A DNA-binding region spans residues 147-263; that stretch reads ESWTVEGFNR…VSATRLAERK (117 aa).

Belongs to the plant ACBP60 protein family. As to quaternary structure, interacts with calmodulin (CaM) in the presence of calcium ions; this interaction is required for defense responses. (Microbial infection) Interacts with V.dahliae SCP41; the interaction is direct and inhibits CBP60G. In terms of tissue distribution, expressed in seedlings, roots, leaves, inflorescences and flowers, and, to a lower extent, in siliques. Particularly present in guard cells.

Its subcellular location is the nucleus. Transcription activator that binds DNA in a sequence-specific manner, 5'-GAAATTTTGG-3', to promote the expression of target genes. Recruited to the promoter of ICS1 and other defense-related genes (e.g. PR1, PR2 and EDS5) in response to both biotic (e.g. Pseudomonas syringae pv. maculicola ES4326, P.syringae pv. tomato DC3000, and microbe-associated molecular patterns (MAMPs) such as flg22) and abiotic stresses (e.g. UV-B, drought and abscisic acid), thus triggering rapid defense responses by stimulating salicylic acid (SA) biosynthesis. Involved in basal and systemic acquired resistance to P.syringae and Hyaloperonospora arabidopsidis. Mediates resistance to drought and sensitivity to abscisic acid (ABA), especially for ABA-mediated signaling process that regulates early seedling growth. In Arabidopsis thaliana (Mouse-ear cress), this protein is Calmodulin-binding protein 60 G.